The primary structure comprises 853 residues: DNA mismatch repair protein MutS (853 aa).

Residue 614-621 participates in ATP binding; the sequence is GPNMGGKS.

This sequence belongs to the DNA mismatch repair MutS family.

This protein is involved in the repair of mismatches in DNA. It is possible that it carries out the mismatch recognition step. This protein has a weak ATPase activity. The sequence is that of DNA mismatch repair protein MutS from Escherichia fergusonii (strain ATCC 35469 / DSM 13698 / CCUG 18766 / IAM 14443 / JCM 21226 / LMG 7866 / NBRC 102419 / NCTC 12128 / CDC 0568-73).